Consider the following 118-residue polypeptide: NADH-quinone oxidoreductase subunit A (118 aa).

The next 3 helical transmembrane spans lie at 5–25, 61–81, and 90–110; these read YLGI…AFAV, FLYA…YPWA, and FAIV…WYAW.

Belongs to the complex I subunit 3 family. In terms of assembly, NDH-1 is composed of 14 different subunits. Subunits NuoA, H, J, K, L, M, N constitute the membrane sector of the complex.

It localises to the cell membrane. It carries out the reaction a quinone + NADH + 5 H(+)(in) = a quinol + NAD(+) + 4 H(+)(out). NDH-1 shuttles electrons from NADH, via FMN and iron-sulfur (Fe-S) centers, to quinones in the respiratory chain. The immediate electron acceptor for the enzyme in this species is believed to be a menaquinone. Couples the redox reaction to proton translocation (for every two electrons transferred, four hydrogen ions are translocated across the cytoplasmic membrane), and thus conserves the redox energy in a proton gradient. The sequence is that of NADH-quinone oxidoreductase subunit A from Heliobacterium modesticaldum (strain ATCC 51547 / Ice1).